Consider the following 270-residue polypeptide: Basigin (270 aa).

Residues 1–21 (MAAVLFALLALALLRAGGASA) form the signal peptide. An Ig-like C2-type domain is found at 22–103 (AAGTVTTSVQ…TGEATLTVDG (82 aa)). The Extracellular portion of the chain corresponds to 22–207 (AAGTVTTSVQ…VTLRVRSRLA (186 aa)). Disulfide bonds link Cys41–Cys87 and Cys126–Cys185. Asn44, Asn75, Asn152, and Asn186 each carry an N-linked (GlcNAc...) asparagine glycan. Positions 105-203 (PRIKAVKKSE…DAAVVTLRVR (99 aa)) constitute an Ig-like V-type domain. The helical transmembrane segment at 208 to 228 (ALWPFLGIVAEVLVLVTVIFI) threads the bilayer. Residues 229 to 270 (YEKRRKPDEVLDDEDAGAAPLKSSGHHVNDDKGKNVRQRNAS) lie on the Cytoplasmic side of the membrane. A disordered region spans residues 239 to 270 (LDDEDAGAAPLKSSGHHVNDDKGKNVRQRNAS). Phosphoserine is present on Ser252.

As to quaternary structure, homooligomer. Interacts with VEGFA, KDR/VEGFR2, PPIA/CYPA, SLC1A3, SLC16A12, SLC16A11, ATP1B2, MAG, L1CAM and AJAP1. Interacts with PPIL2; regulates BSG transport to the cell membrane. Interacts with XKR8; promoting its localization at the cell membrane. Interacts with SLC16A3; interaction mediates SLC16A3 targeting to the plasma membrane. Interacts with SLC16A1; interaction mediates SLC16A1 targeting to the plasma membrane. Interacts with SLC16A6; this interaction mediates targeting to the plasma membrane.

It localises to the cell membrane. It is found in the endoplasmic reticulum membrane. Its subcellular location is the basolateral cell membrane. In terms of biological role, signaling receptor for cyclophilins, essential for PPIA/CYPA and PPIB/CYPB-dependent signaling related to chemotaxis and adhesion of immune cells. Plays an important role in targeting the monocarboxylate transporters SLC16A1/GLUT1, SLC16A3, SLC16A8, SLC16A11 and SLC16A12 to the plasma membrane. Acts as a coreceptor for vascular endothelial growth factor receptor 2 (KDR/VEGFR2) in endothelial cells enhancing its VEGFA-mediated activation and downstream signaling. Promotes angiogenesis through EPAS1/HIF2A-mediated up-regulation of VEGFA and KDR/VEGFR2 in endothelial cells. The polypeptide is Basigin (BSG) (Oryctolagus cuniculus (Rabbit)).